A 449-amino-acid chain; its full sequence is Naphthalene 1,2-dioxygenase system, large oxygenase component (449 aa).

Positions 39–137 (WLFLTHDSLI…LNKKCLGLKE (99 aa)) constitute a Rieske domain. Positions 81, 83, 101, and 104 each coordinate [2Fe-2S] cluster. 3 residues coordinate Fe cation: His-208, His-213, and Asp-362.

Belongs to the bacterial ring-hydroxylating dioxygenase alpha subunit family. The naphthalene dioxygenase (NDO) multicomponent enzyme system is composed of an electron transfer component and a dioxygenase component (iron sulfur protein (ISP)). The electron transfer component is composed of a ferredoxin reductase (NdoR) and a ferredoxin (NdoA), and the dioxygenase component is formed of a heterohexamer (trimer of heterodimers) of three large alpha subunits (NdoB) and three small beta subunits (NdoC). Requires [2Fe-2S] cluster as cofactor. Fe(2+) is required as a cofactor.

The enzyme catalyses naphthalene + NADH + O2 + H(+) = (1R,2S)-1,2-dihydronaphthalene-1,2-diol + NAD(+). It participates in aromatic compound metabolism; naphthalene degradation. Component of the naphthalene dioxygenase (NDO) multicomponent enzyme system which catalyzes the incorporation of both atoms of molecular oxygen into naphthalene to form cis-(1R,2S)-dihydroxy-1,2-dihydronaphthalene. The alpha subunit has a catalytic role in the holoenzyme. Also able to catalyze the cis-dihydroxylation of biphenyl and phenanthrene. The sequence is that of Naphthalene 1,2-dioxygenase system, large oxygenase component from Pseudomonas putida (Arthrobacter siderocapsulatus).